The following is a 589-amino-acid chain: MMRSHYCGALNRGNIGQEVTLSGWVHRRRDLGGLIFIDMRDREGIVQVCFDPKYQEALTAAADLRNEFCIQIKGEVTARPGNQINKNMATGEVEVLAKALSVYNASDVLPLDFNQNNTEEQRLKYRYLDLRRPEMAQRLKTRAKITSFVRRFMDDHGFLDIETPMLTKATPEGARDYLVPSRVHKGKFYALPQSPQLFKQLLMMSGFDRYYQIVKCFRDEDLRADRQPEFTQIDVETSFLTAPEVRAIMENMIRGLWLNILGADLGKFPIMTWNEAMTRFGSDKPDLRNPLEIADVADIVKDVDFKVFADPANDANGRVSVIRVPNGASITRKQIDEYTQFVGIYGAKGLAWLKVNDVNAGLEGVQSPIAKFLSEEKIKAIFDRTSAQTGDILFFGADKWQIATDAMGALRLKLGRDLGLTRLDEWQPLWVIDFPMFECDEEGNLAAMHHPFTSPKDFSPEQLEADPTAAVANAYDMVINGYEVGGGSVRIFDPKMQQTVFRILGIDEQQQREKFGFLLDALKFGTPPHAGLAFGLDRLTMLLTGTDNIRDVIAFPKTTAAACLMTEAPSFANQQALEELAITVVTKEE.

E172 is an L-aspartate binding site. Positions 196–199 (QLFK) are aspartate. R218 lines the L-aspartate pocket. Residues 218–220 (RDE) and Q227 contribute to the ATP site. Residue H449 participates in L-aspartate binding. An ATP-binding site is contributed by E483. L-aspartate is bound at residue R490. 535-538 (GLDR) serves as a coordination point for ATP.

Belongs to the class-II aminoacyl-tRNA synthetase family. Type 1 subfamily. Homodimer.

It is found in the cytoplasm. It catalyses the reaction tRNA(Asp) + L-aspartate + ATP = L-aspartyl-tRNA(Asp) + AMP + diphosphate. Functionally, catalyzes the attachment of L-aspartate to tRNA(Asp) in a two-step reaction: L-aspartate is first activated by ATP to form Asp-AMP and then transferred to the acceptor end of tRNA(Asp). The chain is Aspartate--tRNA ligase from Actinobacillus succinogenes (strain ATCC 55618 / DSM 22257 / CCUG 43843 / 130Z).